The following is a 97-amino-acid chain: uncharacterized protein (97 aa).

This sequence to M.thermoautotrophicum MTH1236.

This is an uncharacterized protein from Methanocaldococcus jannaschii (strain ATCC 43067 / DSM 2661 / JAL-1 / JCM 10045 / NBRC 100440) (Methanococcus jannaschii).